A 250-amino-acid chain; its full sequence is 5'-nucleotidase SurE (250 aa).

A divalent metal cation-binding residues include Asp8, Asp9, Ser40, and Asn94.

It belongs to the SurE nucleotidase family. A divalent metal cation is required as a cofactor.

It localises to the cytoplasm. It catalyses the reaction a ribonucleoside 5'-phosphate + H2O = a ribonucleoside + phosphate. In terms of biological role, nucleotidase that shows phosphatase activity on nucleoside 5'-monophosphates. The chain is 5'-nucleotidase SurE from Wolbachia sp. subsp. Drosophila simulans (strain wRi).